A 121-amino-acid chain; its full sequence is Large ribosomal subunit protein uL14 (121 aa).

Belongs to the universal ribosomal protein uL14 family. Part of the 50S ribosomal subunit. Forms a cluster with proteins L3 and L19. In the 70S ribosome, L14 and L19 interact and together make contacts with the 16S rRNA in bridges B5 and B8.

Its function is as follows. Binds to 23S rRNA. Forms part of two intersubunit bridges in the 70S ribosome. In Mycoplasmopsis synoviae (strain 53) (Mycoplasma synoviae), this protein is Large ribosomal subunit protein uL14.